We begin with the raw amino-acid sequence, 704 residues long: Elongation factor G 1 (704 aa).

One can recognise a tr-type G domain in the interval 8–290 (ERYRNIGICA…CVVEYMPAPT (283 aa)). GTP contacts are provided by residues 17–24 (AHVDAGKT), 88–92 (DTPGH), and 142–145 (NKMD).

Belongs to the TRAFAC class translation factor GTPase superfamily. Classic translation factor GTPase family. EF-G/EF-2 subfamily.

The protein localises to the cytoplasm. In terms of biological role, catalyzes the GTP-dependent ribosomal translocation step during translation elongation. During this step, the ribosome changes from the pre-translocational (PRE) to the post-translocational (POST) state as the newly formed A-site-bound peptidyl-tRNA and P-site-bound deacylated tRNA move to the P and E sites, respectively. Catalyzes the coordinated movement of the two tRNA molecules, the mRNA and conformational changes in the ribosome. The polypeptide is Elongation factor G 1 (Pseudoalteromonas translucida (strain TAC 125)).